A 244-amino-acid chain; its full sequence is Biosynthetic peptidoglycan transglycosylase (244 aa).

Residues 23–43 (LVVIGAWLAGILLFSFLPVPF) traverse the membrane as a helical segment.

The protein belongs to the glycosyltransferase 51 family.

Its subcellular location is the cell inner membrane. The catalysed reaction is [GlcNAc-(1-&gt;4)-Mur2Ac(oyl-L-Ala-gamma-D-Glu-L-Lys-D-Ala-D-Ala)](n)-di-trans,octa-cis-undecaprenyl diphosphate + beta-D-GlcNAc-(1-&gt;4)-Mur2Ac(oyl-L-Ala-gamma-D-Glu-L-Lys-D-Ala-D-Ala)-di-trans,octa-cis-undecaprenyl diphosphate = [GlcNAc-(1-&gt;4)-Mur2Ac(oyl-L-Ala-gamma-D-Glu-L-Lys-D-Ala-D-Ala)](n+1)-di-trans,octa-cis-undecaprenyl diphosphate + di-trans,octa-cis-undecaprenyl diphosphate + H(+). It functions in the pathway cell wall biogenesis; peptidoglycan biosynthesis. Its function is as follows. Peptidoglycan polymerase that catalyzes glycan chain elongation from lipid-linked precursors. The protein is Biosynthetic peptidoglycan transglycosylase of Pectobacterium carotovorum subsp. carotovorum (strain PC1).